The primary structure comprises 307 residues: Branched-chain-amino-acid aminotransferase (307 aa).

N6-(pyridoxal phosphate)lysine is present on Lys-160.

It belongs to the class-IV pyridoxal-phosphate-dependent aminotransferase family. Requires pyridoxal 5'-phosphate as cofactor.

The enzyme catalyses L-leucine + 2-oxoglutarate = 4-methyl-2-oxopentanoate + L-glutamate. It catalyses the reaction L-isoleucine + 2-oxoglutarate = (S)-3-methyl-2-oxopentanoate + L-glutamate. It carries out the reaction L-valine + 2-oxoglutarate = 3-methyl-2-oxobutanoate + L-glutamate. It functions in the pathway amino-acid biosynthesis; L-isoleucine biosynthesis; L-isoleucine from 2-oxobutanoate: step 4/4. It participates in amino-acid biosynthesis; L-leucine biosynthesis; L-leucine from 3-methyl-2-oxobutanoate: step 4/4. The protein operates within amino-acid biosynthesis; L-valine biosynthesis; L-valine from pyruvate: step 4/4. Functionally, acts on leucine, isoleucine and valine. This chain is Branched-chain-amino-acid aminotransferase (ilvE), found in Pseudomonas aeruginosa (strain ATCC 15692 / DSM 22644 / CIP 104116 / JCM 14847 / LMG 12228 / 1C / PRS 101 / PAO1).